Consider the following 843-residue polypeptide: Translation initiation factor IF-2 (843 aa).

The interval 198 to 219 (YKREEEEKKSKAKKAGGKGFKK) is disordered. The segment covering 207–219 (SKAKKAGGKGFKK) has biased composition (basic residues). In terms of domain architecture, tr-type G spans 345–512 (SRAPVVTIMG…AVLLQSEVLE (168 aa)). The G1 stretch occupies residues 354 to 361 (GHVDHGKT). 354-361 (GHVDHGKT) is a binding site for GTP. Positions 379–383 (GITQH) are G2. The tract at residues 400–403 (DTPG) is G3. GTP contacts are provided by residues 400–404 (DTPGH) and 454–457 (NKID). A G4 region spans residues 454–457 (NKID). Residues 490–492 (SAK) are G5.

The protein belongs to the TRAFAC class translation factor GTPase superfamily. Classic translation factor GTPase family. IF-2 subfamily.

It is found in the cytoplasm. Its function is as follows. One of the essential components for the initiation of protein synthesis. Protects formylmethionyl-tRNA from spontaneous hydrolysis and promotes its binding to the 30S ribosomal subunits. Also involved in the hydrolysis of GTP during the formation of the 70S ribosomal complex. This chain is Translation initiation factor IF-2, found in Francisella tularensis subsp. tularensis (strain WY96-3418).